A 367-amino-acid chain; its full sequence is D-alanine--D-alanine ligase (367 aa).

In terms of domain architecture, ATP-grasp spans 139–340; it reads KLILKEKNIP…FSQVIDNMIS (202 aa). 169–224 contributes to the ATP binding site; sequence KEVLEYPMIVKPARLGSSIGVKKVNDKCELEEAIETAFSFDDKVIVEKWIDSRELN. Asp-298, Glu-311, and Asn-313 together coordinate Mg(2+).

This sequence belongs to the D-alanine--D-alanine ligase family. Requires Mg(2+) as cofactor. Mn(2+) is required as a cofactor.

Its subcellular location is the cytoplasm. The enzyme catalyses 2 D-alanine + ATP = D-alanyl-D-alanine + ADP + phosphate + H(+). The protein operates within cell wall biogenesis; peptidoglycan biosynthesis. Functionally, cell wall formation. The polypeptide is D-alanine--D-alanine ligase (Thermosipho africanus (strain TCF52B)).